A 315-amino-acid polypeptide reads, in one-letter code: 4-hydroxy-3-methylbut-2-enyl diphosphate reductase (315 aa).

Cysteine 12 provides a ligand contact to [4Fe-4S] cluster. Residues histidine 41 and histidine 74 each coordinate (2E)-4-hydroxy-3-methylbut-2-enyl diphosphate. Histidine 41 and histidine 74 together coordinate dimethylallyl diphosphate. Isopentenyl diphosphate contacts are provided by histidine 41 and histidine 74. Cysteine 96 lines the [4Fe-4S] cluster pocket. Histidine 124 contacts (2E)-4-hydroxy-3-methylbut-2-enyl diphosphate. Histidine 124 contributes to the dimethylallyl diphosphate binding site. Histidine 124 is an isopentenyl diphosphate binding site. Glutamate 126 (proton donor) is an active-site residue. Threonine 168 is a binding site for (2E)-4-hydroxy-3-methylbut-2-enyl diphosphate. Cysteine 198 contacts [4Fe-4S] cluster. Residues serine 226, serine 227, asparagine 228, and serine 270 each contribute to the (2E)-4-hydroxy-3-methylbut-2-enyl diphosphate site. The dimethylallyl diphosphate site is built by serine 226, serine 227, asparagine 228, and serine 270. Isopentenyl diphosphate contacts are provided by serine 226, serine 227, asparagine 228, and serine 270.

The protein belongs to the IspH family. [4Fe-4S] cluster serves as cofactor.

It carries out the reaction isopentenyl diphosphate + 2 oxidized [2Fe-2S]-[ferredoxin] + H2O = (2E)-4-hydroxy-3-methylbut-2-enyl diphosphate + 2 reduced [2Fe-2S]-[ferredoxin] + 2 H(+). The catalysed reaction is dimethylallyl diphosphate + 2 oxidized [2Fe-2S]-[ferredoxin] + H2O = (2E)-4-hydroxy-3-methylbut-2-enyl diphosphate + 2 reduced [2Fe-2S]-[ferredoxin] + 2 H(+). The protein operates within isoprenoid biosynthesis; dimethylallyl diphosphate biosynthesis; dimethylallyl diphosphate from (2E)-4-hydroxy-3-methylbutenyl diphosphate: step 1/1. It participates in isoprenoid biosynthesis; isopentenyl diphosphate biosynthesis via DXP pathway; isopentenyl diphosphate from 1-deoxy-D-xylulose 5-phosphate: step 6/6. Catalyzes the conversion of 1-hydroxy-2-methyl-2-(E)-butenyl 4-diphosphate (HMBPP) into a mixture of isopentenyl diphosphate (IPP) and dimethylallyl diphosphate (DMAPP). Acts in the terminal step of the DOXP/MEP pathway for isoprenoid precursor biosynthesis. The chain is 4-hydroxy-3-methylbut-2-enyl diphosphate reductase from Azotobacter vinelandii (strain DJ / ATCC BAA-1303).